The chain runs to 151 residues: Transcriptional regulator MraZ (151 aa).

2 consecutive SpoVT-AbrB domains span residues 5 to 52 (ANAI…PLSE) and 81 to 124 (AVDL…DEDA).

The protein belongs to the MraZ family. In terms of assembly, forms oligomers.

The protein localises to the cytoplasm. It localises to the nucleoid. The polypeptide is Transcriptional regulator MraZ (Pseudomonas syringae pv. tomato (strain ATCC BAA-871 / DC3000)).